A 264-amino-acid chain; its full sequence is Expansin-B3 (264 aa).

The signal sequence occupies residues 1–25 (MQLFPVMLATLCIVLQLLIGSSALA). The region spanning 54 to 162 (GGACGYGTLV…RRTACKYRGK (109 aa)) is the Expansin-like EG45 domain. 3 disulfides stabilise this stretch: Cys57–Cys86, Cys89–Cys157, and Cys94–Cys100. Residues 175–256 (FWLSLLVEFE…NWAPKATYSS (82 aa)) enclose the Expansin-like CBD domain.

This sequence belongs to the expansin family. Expansin B subfamily.

Its subcellular location is the secreted. The protein localises to the cell wall. The protein resides in the membrane. In terms of biological role, may cause loosening and extension of plant cell walls by disrupting non-covalent bonding between cellulose microfibrils and matrix glucans. No enzymatic activity has been found. The chain is Expansin-B3 (EXPB3) from Arabidopsis thaliana (Mouse-ear cress).